A 547-amino-acid chain; its full sequence is MRVNLLIAMIIFALIWPATALRAAVSKTTWADAPAREFVFVENNSDDNFFVTPGGALDPRLTGANRWTGLKYNGSGTIYQQSLGYIDNGYNTGLYTNWKFDMWLENSPVSSPLTGLRCINWYAGCNMTTSLILPQTTDASGFYGATVTSGGAKWMHGMLSDAFYQYLQQMPVGSSFTMTINACQTSVNYDANSGARCKDQASGNWYVRNVTHTKAANLRLINTHSLAEVFINSDGVPTLGEGNADCRTQTIGSRSGLSCKMVNYTLQTNGLSNTSIHIFPAIANSSLASAVGAYDMQFSLNGSSWKPVSNTAYYYTFNEMKSADSIYVFFSSNFFKQMVNLGISDINTKDLFNFRFQNTTSPESGWYEFSTSNTLIIKPRDFSISIISDEYTQTPSREGYVGSGESALDFGYIVTTSGKTAADEVLIKVTGPAQVIGGRSYCVFSSDDGKAKVPFPATLSFITRNGATKTYDAGCDDSWRDMTDALWLTTPWTDISGEVGQMDKTTVKFSIPMDNAISLRTVDDNGWFGEVSASGEIHVQATWRNIN.

Residues 1-20 (MRVNLLIAMIIFALIWPATA) form the signal peptide.

This sequence belongs to the EcpD/MatE family. As to quaternary structure, forms polymers. Interacts with EcpA.

It is found in the fimbrium. In terms of biological role, part of the ecpRABCDE operon, which encodes the E.coli common pilus (ECP). ECP is found in both commensal and pathogenic strains and plays a dual role in early-stage biofilm development and host cell recognition. Tip pilus adhesin, which is required for assembly of EcpA into fibers. The protein is Fimbria adhesin EcpD (ecpD) of Escherichia coli O18:K1:H7 (strain IHE3034 / ExPEC).